A 232-amino-acid polypeptide reads, in one-letter code: 2-C-methyl-D-erythritol 4-phosphate cytidylyltransferase (232 aa).

Belongs to the IspD/TarI cytidylyltransferase family. IspD subfamily.

The enzyme catalyses 2-C-methyl-D-erythritol 4-phosphate + CTP + H(+) = 4-CDP-2-C-methyl-D-erythritol + diphosphate. The protein operates within isoprenoid biosynthesis; isopentenyl diphosphate biosynthesis via DXP pathway; isopentenyl diphosphate from 1-deoxy-D-xylulose 5-phosphate: step 2/6. In terms of biological role, catalyzes the formation of 4-diphosphocytidyl-2-C-methyl-D-erythritol from CTP and 2-C-methyl-D-erythritol 4-phosphate (MEP). This Rhodococcus erythropolis (strain PR4 / NBRC 100887) protein is 2-C-methyl-D-erythritol 4-phosphate cytidylyltransferase.